Consider the following 445-residue polypeptide: Phospho-alpha-glucosidase PagL (445 aa).

4-71 (YSICIVGGGS…ELEEVIWTTD (68 aa)) contributes to the NAD(+) binding site. Residues Arg94 and Asn148 each coordinate substrate. Cys171 is a Mn(2+) binding site. Asp172 functions as the Proton donor in the catalytic mechanism. His201 is a Mn(2+) binding site. Tyr264 (proton acceptor) is an active-site residue. Position 284 (Arg284) interacts with substrate.

This sequence belongs to the glycosyl hydrolase 4 family. As to quaternary structure, homotetramer. NAD(+) serves as cofactor. It depends on Mn(2+) as a cofactor.

Phospho-alpha-glucosidase that catalyzes the hydrolysis of p-nitrophenyl-alpha-D-glucopyranoside 6-phosphate, but is not able to cleave 'natural' phospho-alpha-glucosides produced via the phosphoenolpyruvate-dependent sugar phosphotransferase system (PEP-PTS). This is Phospho-alpha-glucosidase PagL (pagL) from Clostridium acetobutylicum (strain ATCC 824 / DSM 792 / JCM 1419 / IAM 19013 / LMG 5710 / NBRC 13948 / NRRL B-527 / VKM B-1787 / 2291 / W).